Here is a 67-residue protein sequence, read N- to C-terminus: Bowman-Birk type proteinase inhibitor A4 (67 aa).

Disulfide bonds link Cys10/Cys29, Cys16/Cys27, Cys36/Cys43, and Cys40/Cys57.

Belongs to the Bowman-Birk serine protease inhibitor family. In terms of tissue distribution, expressed in bulb (at protein level).

Serine protease inhibitor. Inhibits trypsin (Ki=12nM) and weakly inhibits chymotrypsin with (Ki=460nm). Does not inhibit bacterial subtilisin. This chain is Bowman-Birk type proteinase inhibitor A4, found in Hyacinthus orientalis (Common hyacinth).